Consider the following 221-residue polypeptide: MAKNKFNQSWLHDHINDPYVKLAQREGYRARAAYKLKEIDEQDKLIKPGQVIVDLGAAPGSWSQYVRNKLAASPRAKDGRIDGAIVAIDILPMEPVADVTFIQGDFREESVFQQLETIVLDATGGGKVDLVLSDMAPNLSGVASADAARMEHIAELAVEFAQAHLKPEGALLIKCFHGSGYSQIVEMFKRHFRVVAPRKPKASRDKSSETFLLGRQLKHPG.

S-adenosyl-L-methionine-binding residues include glycine 60, tryptophan 62, aspartate 89, aspartate 105, and aspartate 134. Residue lysine 174 is the Proton acceptor of the active site. A disordered region spans residues 199 to 221 (KPKASRDKSSETFLLGRQLKHPG).

It belongs to the class I-like SAM-binding methyltransferase superfamily. RNA methyltransferase RlmE family.

The protein resides in the cytoplasm. It catalyses the reaction uridine(2552) in 23S rRNA + S-adenosyl-L-methionine = 2'-O-methyluridine(2552) in 23S rRNA + S-adenosyl-L-homocysteine + H(+). Specifically methylates the uridine in position 2552 of 23S rRNA at the 2'-O position of the ribose in the fully assembled 50S ribosomal subunit. This Ralstonia nicotianae (strain ATCC BAA-1114 / GMI1000) (Ralstonia solanacearum) protein is Ribosomal RNA large subunit methyltransferase E.